The primary structure comprises 372 residues: Chloromuconate cycloisomerase (372 aa).

Lys-158 (proton acceptor) is an active-site residue. 3 residues coordinate Mn(2+): Asp-187, Glu-213, and Asp-238. Glu-316 serves as the catalytic Proton donor.

The protein belongs to the mandelate racemase/muconate lactonizing enzyme family. Mn(2+) is required as a cofactor.

It catalyses the reaction 2-[(2R)-2-chloro-2,5-dihydro-5-oxofuryl]acetate = 3-chloro-cis,cis-muconate + H(+). It functions in the pathway aromatic compound metabolism; 3-chlorocatechol degradation. This Cupriavidus pinatubonensis (strain JMP 134 / LMG 1197) (Cupriavidus necator (strain JMP 134)) protein is Chloromuconate cycloisomerase (tfdDII).